The following is a 304-amino-acid chain: UDP-3-O-acyl-N-acetylglucosamine deacetylase (304 aa).

Zn(2+) is bound by residues H78, H237, and D241. Catalysis depends on H264, which acts as the Proton donor.

It belongs to the LpxC family. Zn(2+) serves as cofactor.

It catalyses the reaction a UDP-3-O-[(3R)-3-hydroxyacyl]-N-acetyl-alpha-D-glucosamine + H2O = a UDP-3-O-[(3R)-3-hydroxyacyl]-alpha-D-glucosamine + acetate. It functions in the pathway glycolipid biosynthesis; lipid IV(A) biosynthesis; lipid IV(A) from (3R)-3-hydroxytetradecanoyl-[acyl-carrier-protein] and UDP-N-acetyl-alpha-D-glucosamine: step 2/6. Functionally, catalyzes the hydrolysis of UDP-3-O-myristoyl-N-acetylglucosamine to form UDP-3-O-myristoylglucosamine and acetate, the committed step in lipid A biosynthesis. This chain is UDP-3-O-acyl-N-acetylglucosamine deacetylase, found in Xylella fastidiosa (strain Temecula1 / ATCC 700964).